The chain runs to 230 residues: Uracil-DNA glycosylase (230 aa).

Catalysis depends on Asp70, which acts as the Proton acceptor.

The protein belongs to the uracil-DNA glycosylase (UDG) superfamily. UNG family.

Its subcellular location is the cytoplasm. It carries out the reaction Hydrolyzes single-stranded DNA or mismatched double-stranded DNA and polynucleotides, releasing free uracil.. Excises uracil residues from the DNA which can arise as a result of misincorporation of dUMP residues by DNA polymerase or due to deamination of cytosine. This chain is Uracil-DNA glycosylase, found in Pseudomonas fluorescens (strain ATCC BAA-477 / NRRL B-23932 / Pf-5).